The following is a 502-amino-acid chain: MSTANNKPTDESVSLNAFKQPKAFYLIFSIELWERFGFYGLQGIMAVYLVKQLGMSEADSITLFSSFSALVYGLVAVGGWLGDKVLGTKRVIMLGAVVLAIGYGLVAWSGHDAAVVYMGMATIAVGNGLFKANPSSLLSTCYNKDDPRLDGAFTMYYMSINIGSFFSMLATPWLAAKFGWSVAFALSFVGMLITVVNFLFCRSWVKNYGSKPDFEPVHIGKLLATIVGVVILATIATWLLHNQGVARAVLGVVALGIICIFAKEAFAMQGAARRKMIVAFILMLQAVVFFVLYSQMPTSLNFFAIRNVEHSILSIAFEPEQFQALNPFWIMIGSPILAAIYNKMGDRLPMPHKFAIGMVLCSGAFLVLPLGTKFATDAGIVSVNWLILSYALQSIGELMISGLGLAMVAQLVPQRLMGFIMGSWFLTTAGAALIAGKIANLMAVPENVTDPLVSLEVYGRVFMQIGIATAVIAVLMLLTAPKLNRMTLEDDKAAKATDTATA.

Residues 1–35 are Cytoplasmic-facing; the sequence is MSTANNKPTDESVSLNAFKQPKAFYLIFSIELWER. The helical transmembrane segment at 36 to 56 threads the bilayer; it reads FGFYGLQGIMAVYLVKQLGMS. Residues 57–60 lie on the Periplasmic side of the membrane; the sequence is EADS. A helical transmembrane segment spans residues 61–81; that stretch reads ITLFSSFSALVYGLVAVGGWL. The Cytoplasmic portion of the chain corresponds to 82–90; it reads GDKVLGTKR. A helical transmembrane segment spans residues 91 to 111; it reads VIMLGAVVLAIGYGLVAWSGH. Position 112 (Asp-112) is a topological domain, periplasmic. Residues 113–133 form a helical membrane-spanning segment; the sequence is AAVVYMGMATIAVGNGLFKAN. Residues 134–154 are Cytoplasmic-facing; sequence PSSLLSTCYNKDDPRLDGAFT. Residues 155-175 traverse the membrane as a helical segment; sequence MYYMSINIGSFFSMLATPWLA. The Periplasmic portion of the chain corresponds to 176-179; it reads AKFG. The chain crosses the membrane as a helical span at residues 180 to 200; the sequence is WSVAFALSFVGMLITVVNFLF. Topologically, residues 201-218 are cytoplasmic; the sequence is CRSWVKNYGSKPDFEPVH. A helical membrane pass occupies residues 219-239; that stretch reads IGKLLATIVGVVILATIATWL. At 240 to 247 the chain is on the periplasmic side; it reads LHNQGVAR. Residues 248-268 traverse the membrane as a helical segment; the sequence is AVLGVVALGIICIFAKEAFAM. The Cytoplasmic segment spans residues 269 to 275; it reads QGAARRK. Residues 276–296 traverse the membrane as a helical segment; sequence MIVAFILMLQAVVFFVLYSQM. Residues 297-321 are Periplasmic-facing; sequence PTSLNFFAIRNVEHSILSIAFEPEQ. A helical membrane pass occupies residues 322–342; the sequence is FQALNPFWIMIGSPILAAIYN. The Cytoplasmic portion of the chain corresponds to 343–353; sequence KMGDRLPMPHK. The helical transmembrane segment at 354-374 threads the bilayer; the sequence is FAIGMVLCSGAFLVLPLGTKF. At 375-384 the chain is on the periplasmic side; sequence ATDAGIVSVN. Residues 385 to 405 form a helical membrane-spanning segment; sequence WLILSYALQSIGELMISGLGL. Residues 406–415 lie on the Cytoplasmic side of the membrane; the sequence is AMVAQLVPQR. The chain crosses the membrane as a helical span at residues 416-436; the sequence is LMGFIMGSWFLTTAGAALIAG. The Periplasmic portion of the chain corresponds to 437–460; it reads KIANLMAVPENVTDPLVSLEVYGR. Residues 461-481 traverse the membrane as a helical segment; sequence VFMQIGIATAVIAVLMLLTAP. The Cytoplasmic segment spans residues 482 to 502; it reads KLNRMTLEDDKAAKATDTATA.

The protein belongs to the major facilitator superfamily. Proton-dependent oligopeptide transporter (POT/PTR) (TC 2.A.17) family. DtpA subfamily.

The protein localises to the cell inner membrane. Functionally, proton-dependent permease that transports di- and tripeptides. This Enterobacter sp. (strain 638) protein is Dipeptide and tripeptide permease A.